The sequence spans 253 residues: Polyhedrin (253 aa).

Major component of the virus occlusion bodies, which are large proteinaceous structures (polyhedra), that protect the virus from the outside environment for extended periods until they are ingested by insect larvae. This Orgyia pseudotsugata cypovirus (OpCPV) protein is Polyhedrin.